Here is a 228-residue protein sequence, read N- to C-terminus: Phosphoglycolate phosphatase (228 aa).

The active-site Nucleophile is aspartate 12. Mg(2+) contacts are provided by aspartate 12, aspartate 14, and aspartate 177.

Belongs to the HAD-like hydrolase superfamily. CbbY/CbbZ/Gph/YieH family. Requires Mg(2+) as cofactor.

The enzyme catalyses 2-phosphoglycolate + H2O = glycolate + phosphate. The protein operates within organic acid metabolism; glycolate biosynthesis; glycolate from 2-phosphoglycolate: step 1/1. Its function is as follows. Specifically catalyzes the dephosphorylation of 2-phosphoglycolate. Is involved in the dissimilation of the intracellular 2-phosphoglycolate formed during the DNA repair of 3'-phosphoglycolate ends, a major class of DNA lesions induced by oxidative stress. The sequence is that of Phosphoglycolate phosphatase from Vibrio vulnificus (strain CMCP6).